Consider the following 551-residue polypeptide: DNA ligase (551 aa).

E246 serves as a coordination point for ATP. Catalysis depends on K248, which acts as the N6-AMP-lysine intermediate. 6 residues coordinate ATP: R253, R268, E298, F337, R414, and K420.

Belongs to the ATP-dependent DNA ligase family. Mg(2+) serves as cofactor.

It carries out the reaction ATP + (deoxyribonucleotide)n-3'-hydroxyl + 5'-phospho-(deoxyribonucleotide)m = (deoxyribonucleotide)n+m + AMP + diphosphate.. Functionally, DNA ligase that seals nicks in double-stranded DNA during DNA replication, DNA recombination and DNA repair. The polypeptide is DNA ligase (Methanobrevibacter smithii (strain ATCC 35061 / DSM 861 / OCM 144 / PS)).